A 162-amino-acid polypeptide reads, in one-letter code: MAVKIKLTRLGKIRNPQYRVAVADARTRRDGRAIEVIGRYHPKEEPSLIEINSERAQYWLSVGAQPTEPVLKLLKITGDWQKFKGLPGAQGRLKVAAPKPSKLEVFNAALAAADGGPTTEATKPKKKSPAKKAAKAAEPAPQPEQPDTPALGGEQAELTAES.

A disordered region spans residues 113–162 (ADGGPTTEATKPKKKSPAKKAAKAAEPAPQPEQPDTPALGGEQAELTAES). The segment covering 124-134 (PKKKSPAKKAA) has biased composition (basic residues).

This sequence belongs to the bacterial ribosomal protein bS16 family.

In Mycobacterium tuberculosis (strain ATCC 25177 / H37Ra), this protein is Small ribosomal subunit protein bS16.